An 81-amino-acid chain; its full sequence is Pyruvate synthase subunit PorD (81 aa).

The tract at residues 1-20 is disordered; it reads MESLGATVKEPGSTRKNKTG. 4Fe-4S ferredoxin-type domains lie at 25–54 and 51–80; these read FKPF…KEHE and KEHE…MERE. [4Fe-4S] cluster is bound by residues C34, C37, C40, C44, C60, C63, C66, and C70.

Heterotetramer of one alpha, one beta, one delta and one gamma chain. [4Fe-4S] cluster serves as cofactor.

In Methanothermobacter marburgensis (strain ATCC BAA-927 / DSM 2133 / JCM 14651 / NBRC 100331 / OCM 82 / Marburg) (Methanobacterium thermoautotrophicum), this protein is Pyruvate synthase subunit PorD (porD).